A 554-amino-acid polypeptide reads, in one-letter code: Zinc finger protein 426 (554 aa).

In terms of domain architecture, KRAB spans 42-112; that stretch reads VTFDDVAVDF…QGGVLQGWEM (71 aa). Residues 146-174 form a C2H2-type 1; atypical zinc finger; sequence CDCEQCGEVFSEHSCLKTHVRTQSTGNTH. C2H2-type zinc fingers lie at residues 224 to 246, 280 to 302, 308 to 330, 336 to 358, 364 to 386, 392 to 414, 420 to 442, 448 to 470, 476 to 498, 504 to 526, and 532 to 554; these read FECSHCGKSFINESYLQAHMRTH, YKCKECGKGYRYPAYLSIHMRTH, YECKECGKAFNYSNSFQIHGRTH, YVCKECGKAFTQYSGLSMHVRSH, YECKECGKSFLTSSRLIQHIRTH, FVCVECGKAFAVSSNLSGHLRTH, CECKICGKVFGYPSCLNNHMRTH, YTCKECGKAFNYSTHLKIHMRIH, YECKQCGKAFSHSSSFQIHERTH, YECKECGKAFTCSSSFRIHEKTH, and YKCQQCGKAYSHPRSLRRHEQIH.

It localises to the nucleus. Its function is as follows. May be involved in transcriptional regulation. This Homo sapiens (Human) protein is Zinc finger protein 426 (ZNF426).